Consider the following 142-residue polypeptide: Large ribosomal subunit protein uL11 (142 aa).

The protein belongs to the universal ribosomal protein uL11 family. Part of the ribosomal stalk of the 50S ribosomal subunit. Interacts with L10 and the large rRNA to form the base of the stalk. L10 forms an elongated spine to which L12 dimers bind in a sequential fashion forming a multimeric L10(L12)X complex. In terms of processing, one or more lysine residues are methylated.

Functionally, forms part of the ribosomal stalk which helps the ribosome interact with GTP-bound translation factors. This chain is Large ribosomal subunit protein uL11, found in Rhizobium meliloti (strain 1021) (Ensifer meliloti).